Reading from the N-terminus, the 346-residue chain is Very-long-chain 3-oxoacyl-CoA reductase (346 aa).

Residues 19–39 (VLLGALLVGVFKLTVFILSVT) form a helical membrane-spanning segment. NADP(+) is bound by residues V65, D119, N146, Y220, K224, V253, and S255. The active-site Proton donor is Y220. K224 serves as the catalytic Lowers pKa of active site Tyr.

This sequence belongs to the short-chain dehydrogenases/reductases (SDR) family.

It is found in the endoplasmic reticulum membrane. The catalysed reaction is a very-long-chain (3R)-3-hydroxyacyl-CoA + NADP(+) = a very-long-chain 3-oxoacyl-CoA + NADPH + H(+). The protein operates within lipid metabolism; fatty acid biosynthesis. Its function is as follows. Component of the microsomal membrane bound fatty acid elongation system, which produces the 26-carbon very long-chain fatty acids (VLCFA) from palmitate. Catalyzes the reduction of the 3-ketoacyl-CoA intermediate that is formed in each cycle of fatty acid elongation. VLCFAs serve as precursors for ceramide and sphingolipids. In Scheffersomyces stipitis (strain ATCC 58785 / CBS 6054 / NBRC 10063 / NRRL Y-11545) (Yeast), this protein is Very-long-chain 3-oxoacyl-CoA reductase.